The primary structure comprises 369 residues: NAD(P)H-quinone oxidoreductase subunit 1, chloroplastic (369 aa).

Transmembrane regions (helical) follow at residues phenylalanine 25–isoleucine 45, valine 104–isoleucine 124, isoleucine 130–glycine 150, leucine 270–proline 290, and valine 306–isoleucine 326.

The protein belongs to the complex I subunit 1 family. In terms of assembly, NDH is composed of at least 16 different subunits, 5 of which are encoded in the nucleus.

The protein resides in the plastid. The protein localises to the chloroplast thylakoid membrane. It carries out the reaction a plastoquinone + NADH + (n+1) H(+)(in) = a plastoquinol + NAD(+) + n H(+)(out). The enzyme catalyses a plastoquinone + NADPH + (n+1) H(+)(in) = a plastoquinol + NADP(+) + n H(+)(out). Its function is as follows. NDH shuttles electrons from NAD(P)H:plastoquinone, via FMN and iron-sulfur (Fe-S) centers, to quinones in the photosynthetic chain and possibly in a chloroplast respiratory chain. The immediate electron acceptor for the enzyme in this species is believed to be plastoquinone. Couples the redox reaction to proton translocation, and thus conserves the redox energy in a proton gradient. The sequence is that of NAD(P)H-quinone oxidoreductase subunit 1, chloroplastic from Huperzia lucidula (Shining clubmoss).